The following is a 634-amino-acid chain: MSSSTRKLEVVSPVPADIDIANSVEPLHISEIAKDLNINPLHYDLYGKYKAKVLLSAFDELQGQEDGYYVVVGGITPTPLGEGKSTTTVGLCQALGAYLDKKVVTCLRQPSQGPTFGIKGGAAGGGYSQVIPMDEFNLHLTGDIHAITASNNLLAAAIDTRIFHETSQSDKALFNRLCPPNKEGKRSFSDIMFRRLTKLGISKTSPEELTPEEIKKFARLDIDPASITWRRVMDVNDRFLRKITIGQGPEEKGMTRETGFDISVASEIMAVLALTTSLGDMRERLGKMVIGNSKAGDPITADDLGVGGALTVLMKDAINPTLMQTLEGTPVLVHAGPFANIAHGNSSIVADKIALKLVGPGGFVVTEAGFGSDIGTEKFMNIKCRYSGLTPQCAIVVATVRALKMHGGGPDVVAGRPLDRAYVSENVSLVEAGCVNLAKHISNTKAYGVNVIVAVNMFATDTEAELNAVRKFSMDAGAFDAVVCSHHAHSGKGAVDLGIAVEKACQNITQPLRFLYPLDIGIKDKIEAIAKSYGASGVEYSDQAEKQIEMYTQQGFSNLPICMSKTQYSFSHDASKKGAPSGFVLPIRDVRGSIGAGFIYPLVGTMSTMPGLPTRPCFYEIDIDTETGKVRGLS.

Residue threonine 78–serine 85 participates in ATP binding.

The protein belongs to the formate--tetrahydrofolate ligase family. As to quaternary structure, homodimer.

The enzyme catalyses (6S)-5,6,7,8-tetrahydrofolate + formate + ATP = (6R)-10-formyltetrahydrofolate + ADP + phosphate. It functions in the pathway one-carbon metabolism; tetrahydrofolate interconversion. This is Formate--tetrahydrofolate ligase (THFS) from Arabidopsis thaliana (Mouse-ear cress).